A 349-amino-acid polypeptide reads, in one-letter code: Anthranilate phosphoribosyltransferase (349 aa).

5-phospho-alpha-D-ribose 1-diphosphate-binding positions include G82, 85 to 86 (GD), 92 to 95 (NVST), 110 to 118 (KHGNRAVSG), and S122. G82 contacts anthranilate. S94 lines the Mg(2+) pocket. Anthranilate is bound at residue N113. Position 168 (R168) interacts with anthranilate. Mg(2+)-binding residues include D227 and E228.

It belongs to the anthranilate phosphoribosyltransferase family. Homodimer. It depends on Mg(2+) as a cofactor.

The enzyme catalyses N-(5-phospho-beta-D-ribosyl)anthranilate + diphosphate = 5-phospho-alpha-D-ribose 1-diphosphate + anthranilate. It participates in amino-acid biosynthesis; L-tryptophan biosynthesis; L-tryptophan from chorismate: step 2/5. Its function is as follows. Catalyzes the transfer of the phosphoribosyl group of 5-phosphorylribose-1-pyrophosphate (PRPP) to anthranilate to yield N-(5'-phosphoribosyl)-anthranilate (PRA). The sequence is that of Anthranilate phosphoribosyltransferase from Pseudomonas putida (strain ATCC 700007 / DSM 6899 / JCM 31910 / BCRC 17059 / LMG 24140 / F1).